Here is a 131-residue protein sequence, read N- to C-terminus: Small ribosomal subunit protein uS8 (131 aa).

It belongs to the universal ribosomal protein uS8 family. Part of the 30S ribosomal subunit. Contacts proteins S5 and S12.

Its function is as follows. One of the primary rRNA binding proteins, it binds directly to 16S rRNA central domain where it helps coordinate assembly of the platform of the 30S subunit. This is Small ribosomal subunit protein uS8 from Wolbachia sp. subsp. Brugia malayi (strain TRS).